The sequence spans 187 residues: UPF0301 protein VP2612 (187 aa).

The protein belongs to the UPF0301 (AlgH) family.

This Vibrio parahaemolyticus serotype O3:K6 (strain RIMD 2210633) protein is UPF0301 protein VP2612.